A 302-amino-acid chain; its full sequence is Polyamine aminopropyltransferase (302 aa).

Positions 4 to 239 constitute a PABS domain; that stretch reads WTWHLEWQTP…GLWGFIYASD (236 aa). S-methyl-5'-thioadenosine is bound at residue Q33. Spermidine contacts are provided by H64 and E88. S-methyl-5'-thioadenosine contacts are provided by residues D108 and 140 to 141; that span reads DG. D158 (proton acceptor) is an active-site residue. P167 serves as a coordination point for S-methyl-5'-thioadenosine.

It belongs to the spermidine/spermine synthase family. Homodimer or homotetramer.

The protein localises to the cytoplasm. The catalysed reaction is S-adenosyl 3-(methylsulfanyl)propylamine + putrescine = S-methyl-5'-thioadenosine + spermidine + H(+). It functions in the pathway amine and polyamine biosynthesis; spermidine biosynthesis; spermidine from putrescine: step 1/1. Catalyzes the irreversible transfer of a propylamine group from the amino donor S-adenosylmethioninamine (decarboxy-AdoMet) to putrescine (1,4-diaminobutane) to yield spermidine. The sequence is that of Polyamine aminopropyltransferase from Sulfolobus acidocaldarius (strain ATCC 33909 / DSM 639 / JCM 8929 / NBRC 15157 / NCIMB 11770).